A 239-amino-acid chain; its full sequence is 1-(5-phosphoribosyl)-5-[(5-phosphoribosylamino)methylideneamino] imidazole-4-carboxamide isomerase (239 aa).

D8 acts as the Proton acceptor in catalysis. D130 (proton donor) is an active-site residue.

It belongs to the HisA/HisF family.

It localises to the cytoplasm. The enzyme catalyses 1-(5-phospho-beta-D-ribosyl)-5-[(5-phospho-beta-D-ribosylamino)methylideneamino]imidazole-4-carboxamide = 5-[(5-phospho-1-deoxy-D-ribulos-1-ylimino)methylamino]-1-(5-phospho-beta-D-ribosyl)imidazole-4-carboxamide. It participates in amino-acid biosynthesis; L-histidine biosynthesis; L-histidine from 5-phospho-alpha-D-ribose 1-diphosphate: step 4/9. The polypeptide is 1-(5-phosphoribosyl)-5-[(5-phosphoribosylamino)methylideneamino] imidazole-4-carboxamide isomerase (Streptococcus thermophilus (strain ATCC BAA-491 / LMD-9)).